Reading from the N-terminus, the 252-residue chain is uncharacterized protein (252 aa).

The first 23 residues, 1–23 (MKLLKTVPAIVMLAGGMFASLNA), serve as a signal peptide directing secretion. The disordered stretch occupies residues 231–252 (EPPESAPEHTDRRTTLSLGYSM).

This is an uncharacterized protein from Escherichia coli (strain K12).